A 100-amino-acid chain; its full sequence is uncharacterized protein (100 aa).

Residues 65–91 are compositionally biased toward basic and acidic residues; that stretch reads DDRERHLSATGERRREQGFGTSRRKDP. A disordered region spans residues 65–100; the sequence is DDRERHLSATGERRREQGFGTSRRKDPSLYNWSDVK.

It belongs to the chlamydial CPn_0121/CT_031/TC_0300 family.

This is an uncharacterized protein from Chlamydia trachomatis serovar D (strain ATCC VR-885 / DSM 19411 / UW-3/Cx).